The chain runs to 75 residues: MPQHSRYSDEHVEQLLSDLLNVLEKHKAPTDLSLMVLGNMVTNLINTSIAPAQRQAIANSFARALQSSINDDKAH.

This sequence belongs to the UPF0352 family.

The protein is UPF0352 protein CKO_00587 of Citrobacter koseri (strain ATCC BAA-895 / CDC 4225-83 / SGSC4696).